We begin with the raw amino-acid sequence, 75 residues long: MQKKVKVKPNSKQQKIAEQDDGSLTVHLKSPPVDGKANEELIKLLAEKFAVPKSHITIKSGLSSRQKLIEIDTDI.

The segment at 1–32 (MQKKVKVKPNSKQQKIAEQDDGSLTVHLKSPP) is disordered.

This sequence belongs to the UPF0235 family.

The protein is UPF0235 protein Ava_3894 of Trichormus variabilis (strain ATCC 29413 / PCC 7937) (Anabaena variabilis).